Reading from the N-terminus, the 321-residue chain is Transaldolase (321 aa).

Residue lysine 132 is the Schiff-base intermediate with substrate of the active site.

It belongs to the transaldolase family. Type 1 subfamily. As to quaternary structure, homodimer.

Its subcellular location is the cytoplasm. It carries out the reaction D-sedoheptulose 7-phosphate + D-glyceraldehyde 3-phosphate = D-erythrose 4-phosphate + beta-D-fructose 6-phosphate. It functions in the pathway carbohydrate degradation; pentose phosphate pathway; D-glyceraldehyde 3-phosphate and beta-D-fructose 6-phosphate from D-ribose 5-phosphate and D-xylulose 5-phosphate (non-oxidative stage): step 2/3. In terms of biological role, transaldolase is important for the balance of metabolites in the pentose-phosphate pathway. This chain is Transaldolase, found in Marinobacter nauticus (strain ATCC 700491 / DSM 11845 / VT8) (Marinobacter aquaeolei).